The following is a 252-amino-acid chain: O-methyltransferase hkm8 (252 aa).

S-adenosyl-L-methionine-binding positions include E73, 75–76 (GT), S81, and D100.

It belongs to the class I-like SAM-binding methyltransferase superfamily. Cation-dependent O-methyltransferase family.

It participates in secondary metabolite biosynthesis. Its function is as follows. O-methyltransferase; part of the gene cluster that mediates the biosynthesis of hancockiamides, an unusual new family of N-cinnamoylated piperazines. The NRPS hkm10 and the NmrA-like reductase hkm9 are proposed to convert two molecules of L-Phe to the intermediary piperazine called xenocockiamide A. Xenocockiamide A is then converted to hancockiamide D via a series of hydroxylations and O-methylations. The tyrosinase hkm6 may catalyze an aromatic hydroxylation, then the 2-oxoglutarate-dependent Fe(II) dioxygenase hkm4 and the FAD-dependent phenol hydroxylase hkm7 may catalyze consecutive hydroxylations to install 2 more hydroxy groups, and the methyltransferase hkm8 probably catalyzes two methylations using 2 molecules of S-adenosyl-L-methionine (SAM). The NRPS hkm11 activates and transfers trans-cinnamate supplied by the PAL hkm12 to hancockiamide D and produces hancockiamide A. NRPS Hkm11 has the flexibility to tolerate the bulky hancockiamide G as a substrate and the absence of the acetyl-transferase hkm3 opens up the opportunity for hkm11 to introduce a second N-cinnamoyl moiety. The cytochrome P450 monooxygenase hkm5 catalyzes the methylenedioxy bridge formation, converting hancockiamide A into hancockiamide G. Hkm5 can also convert hancockiamide B into hancockiamide C, and hancockiamide D into hancockiamide H. The N-acetyltransferase hkm3 finally transfers an acetyl group to 1-N of piperazine, converting hancockiamide A into hancockiamide B and hancockiamide G into hancockiamide C. This is O-methyltransferase hkm8 from Aspergillus hancockii.